Reading from the N-terminus, the 136-residue chain is NHL-repeat-containing protein 4 (136 aa).

NHL repeat units follow at residues 48 to 91 and 93 to 132; these read QPLG…FPRV and PPICLQLEGLKRPLGMACAPQGQLVVADAGDNCIKLYQYL.

This Mus musculus (Mouse) protein is NHL-repeat-containing protein 4 (Nhlrc4).